The chain runs to 414 residues: F-box protein At3g26010 (414 aa).

The 48-residue stretch at 5 to 52 folds into the F-box domain; that stretch reads NRTIHLTDAIWTEILARLPLRIIARFKSVSKTWKSTIESVYFRRLFVS.

The protein is F-box protein At3g26010 of Arabidopsis thaliana (Mouse-ear cress).